We begin with the raw amino-acid sequence, 1215 residues long: Zinc finger SWIM domain-containing protein 6 (1215 aa).

2 disordered regions span residues 1–46 and 133–161; these read MAER…RPGP and AAGGPGDDSGGGGGAGGGGGGGSSSSPAA. Gly residues-rich tracts occupy residues 18 to 38 and 133 to 155; these read PGGGGGGGGSSGGGGGAGGGY and AAGGPGDDSGGGGGAGGGGGGGS. The segment at 246–283 adopts an SWIM-type zinc-finger fold; the sequence is CNVAISFDRCKITSVTCSCGNKDIFYCAHVVALSLYRI.

In terms of biological role, involved in nervous system development, important for striatal morphology and motor regulation. This Homo sapiens (Human) protein is Zinc finger SWIM domain-containing protein 6.